The primary structure comprises 1217 residues: Sterol 3-beta-glucosyltransferase (1217 aa).

Positions 195–232 constitute a GRAM 1 domain; that stretch reads EFVRKYFGISEEETLIGHYTGWLLQEVLIQGNLFITNS. One can recognise a PH domain in the interval 246 to 343; it reads AVVLCGKLKL…WVKCLKKQLF (98 aa). A GRAM 2 domain is found at 590-656; sequence AKIKDWFNLH…EDIEGYNEIL (67 aa). Residues serine 766, arginine 767, aspartate 769, asparagine 1042, isoleucine 1072, histidine 1074, histidine 1087, serine 1090, glycine 1091, threonine 1092, aspartate 1111, and glutamine 1112 each coordinate UDP-alpha-D-glucose.

Belongs to the glycosyltransferase 28 family.

It localises to the cytoplasm. It is found in the membrane. It catalyses the reaction a sterol + UDP-alpha-D-glucose = a sterol 3-beta-D-glucoside + UDP + H(+). The enzyme catalyses ergosterol + UDP-alpha-D-glucose = ergosteryl 3-beta-D-glucoside + UDP + H(+). Its function is as follows. Sterol glycosyltransferase responsible for the glycosylation of ergosterol to form ergosterol-glucoside. The protein is Sterol 3-beta-glucosyltransferase of Vanderwaltozyma polyspora (strain ATCC 22028 / DSM 70294 / BCRC 21397 / CBS 2163 / NBRC 10782 / NRRL Y-8283 / UCD 57-17) (Kluyveromyces polysporus).